We begin with the raw amino-acid sequence, 1005 residues long: Isoleucine--tRNA ligase (1005 aa).

The 'HIGH' region motif lies at 70 to 80 (PYANGNIHIGH). Position 629 (E629) interacts with L-isoleucyl-5'-AMP. Residues 670–674 (KMSKS) carry the 'KMSKS' region motif. Residue K673 coordinates ATP.

It belongs to the class-I aminoacyl-tRNA synthetase family. IleS type 1 subfamily. Monomer.

Its subcellular location is the cytoplasm. The enzyme catalyses tRNA(Ile) + L-isoleucine + ATP = L-isoleucyl-tRNA(Ile) + AMP + diphosphate. Catalyzes the attachment of isoleucine to tRNA(Ile). As IleRS can inadvertently accommodate and process structurally similar amino acids such as valine, to avoid such errors it has two additional distinct tRNA(Ile)-dependent editing activities. One activity is designated as 'pretransfer' editing and involves the hydrolysis of activated Val-AMP. The other activity is designated 'posttransfer' editing and involves deacylation of mischarged Val-tRNA(Ile). The protein is Isoleucine--tRNA ligase of Rhodopseudomonas palustris (strain ATCC BAA-98 / CGA009).